The sequence spans 179 residues: ATP synthase subunit b (179 aa).

Residues 23 to 43 (IFWLIITFGILYVVLSKLILP) form a helical membrane-spanning segment.

Belongs to the ATPase B chain family. In terms of assembly, F-type ATPases have 2 components, F(1) - the catalytic core - and F(0) - the membrane proton channel. F(1) has five subunits: alpha(3), beta(3), gamma(1), delta(1), epsilon(1). F(0) has three main subunits: a(1), b(2) and c(10-14). The alpha and beta chains form an alternating ring which encloses part of the gamma chain. F(1) is attached to F(0) by a central stalk formed by the gamma and epsilon chains, while a peripheral stalk is formed by the delta and b chains.

Its subcellular location is the cell inner membrane. Functionally, f(1)F(0) ATP synthase produces ATP from ADP in the presence of a proton or sodium gradient. F-type ATPases consist of two structural domains, F(1) containing the extramembraneous catalytic core and F(0) containing the membrane proton channel, linked together by a central stalk and a peripheral stalk. During catalysis, ATP synthesis in the catalytic domain of F(1) is coupled via a rotary mechanism of the central stalk subunits to proton translocation. Component of the F(0) channel, it forms part of the peripheral stalk, linking F(1) to F(0). The polypeptide is ATP synthase subunit b (Pelagibacter ubique (strain HTCC1062)).